We begin with the raw amino-acid sequence, 270 residues long: Tryptophan synthase alpha chain (270 aa).

Active-site proton acceptor residues include Glu49 and Asp60.

The protein belongs to the TrpA family. As to quaternary structure, tetramer of two alpha and two beta chains.

The enzyme catalyses (1S,2R)-1-C-(indol-3-yl)glycerol 3-phosphate + L-serine = D-glyceraldehyde 3-phosphate + L-tryptophan + H2O. It functions in the pathway amino-acid biosynthesis; L-tryptophan biosynthesis; L-tryptophan from chorismate: step 5/5. Its function is as follows. The alpha subunit is responsible for the aldol cleavage of indoleglycerol phosphate to indole and glyceraldehyde 3-phosphate. This is Tryptophan synthase alpha chain from Marinobacter nauticus (strain ATCC 700491 / DSM 11845 / VT8) (Marinobacter aquaeolei).